The sequence spans 107 residues: Class I hydrophobin hgfI (107 aa).

The N-terminal stretch at 1–24 (MFSKLAIFATAAFAVLAAATPVRR) is a signal peptide. Cystine bridges form between C27-C88, C34-C82, C35-C68, and C89-C102.

The protein belongs to the fungal hydrophobin family. In terms of assembly, self-assembles to form functional amyloid fibrils called rodlets with a length range 100-150 nm. Self-assembly into fibrillar rodlets occurs spontaneously at hydrophobic:hydrophilic interfaces and the rodlets further associate laterally to form amphipathic monolayers. In terms of tissue distribution, only weekly expressed in hyphae cultured in liquid medium.

It localises to the secreted. The protein resides in the cell wall. Its function is as follows. Aerial growth, conidiation, and dispersal of filamentous fungi in the environment rely upon a capability of their secreting small amphipathic proteins called hydrophobins (HPBs) with low sequence identity. Class I can self-assemble into an outermost layer of rodlet bundles on aerial cell surfaces, conferring cellular hydrophobicity that supports fungal growth, development and dispersal; whereas Class II form highly ordered films at water-air interfaces through intermolecular interactions but contribute nothing to the rodlet structure. HgfI is a class I hydrophobin that is involved in cell surface hydrophobicity and lowers the surface tension of water and change the nature of the surfaces to which it adsorbs. This chain is Class I hydrophobin hgfI, found in Grifola frondosa (Maitake).